The chain runs to 320 residues: Olfactory receptor 52W1 (320 aa).

Residues 1 to 30 (MAETLQLNSTFLHPNFFILTGFPGLGSAQT) lie on the Extracellular side of the membrane. N-linked (GlcNAc...) asparagine glycosylation occurs at Asn8. Residues 31–51 (WLTLVFGPIYLLALLGNGALP) traverse the membrane as a helical segment. The Cytoplasmic segment spans residues 52-59 (AVVWIDST). The chain crosses the membrane as a helical span at residues 60-80 (LHQPMFLLLAILAATDLGLAT). At 81–104 (SIAPGLLAVLWLGPRSVPYAVCLV) the chain is on the extracellular side. A helical membrane pass occupies residues 105–125 (QMFFVHALTAMESGVLLAMAC). Residues 126–144 (DRAAAIGRPLHYPVLVTKA) are Cytoplasmic-facing. A helical transmembrane segment spans residues 145–165 (CVGYAALALALKAVAIVVPFP). Topologically, residues 166-201 (LLVAKFEHFQAKTIGHTYCAHMAVVELVVGNTQATN) are extracellular. The helical transmembrane segment at 202–222 (LYGLALSLAISGMDILGITGS) threads the bilayer. Over 223 to 242 (YGLIAHAVLQLPTREAHAKA) the chain is Cytoplasmic. The helical transmembrane segment at 243–263 (FGTCSSHICVILAFYIPGLFS) threads the bilayer. Topologically, residues 264-279 (YLTHRFGHHTVPKPVH) are extracellular. The helical transmembrane segment at 280–300 (ILLSNIYLLLPPALNPLIYGA) threads the bilayer. The Cytoplasmic portion of the chain corresponds to 301-320 (RTKQIRDRLLETFTFRKSPL).

This sequence belongs to the G-protein coupled receptor 1 family.

The protein resides in the cell membrane. Odorant receptor. In Homo sapiens (Human), this protein is Olfactory receptor 52W1 (OR52W1).